Here is a 207-residue protein sequence, read N- to C-terminus: MSFAMLRSAPPPGRYLYPEVSPLSEDEDRGSESSGSDEKPCRVHAARCGLQGARRRAGGRRAAGSGPGPGGRPGREPRQRHTANARERDRTNSVNTAFTALRTLIPTEPADRKLSKIETLRLASSYISHLGNVLLVGEACGDGQPCHSGPAFFHSGRAGSPLPPPPPPPPLARDGGENTQPKQICTFCLSNQRKLSKDRDRKTAIRS.

Disordered stretches follow at residues 1–91 (MSFA…RDRT) and 151–183 (AFFH…QPKQ). A compositionally biased stretch (basic and acidic residues) spans 73 to 91 (PGREPRQRHTANARERDRT). The region spanning 78 to 130 (RQRHTANARERDRTNSVNTAFTALRTLIPTEPADRKLSKIETLRLASSYISHL) is the bHLH domain. Residues 161 to 171 (PLPPPPPPPPL) show a composition bias toward pro residues.

As to quaternary structure, efficient DNA binding requires dimerization with another bHLH protein. Dimerizes and binds the E-box consensus sequence with E12. As to expression, expressed in mesenchymal precursors of cartilage and in connective tissue. Highly expressed in tendons in the limb, tongue and diaphragm and in cartilage of the bronchi.

The protein localises to the nucleus. Functionally, plays an early essential role in mesoderm formation, as well as a later role in formation of somite-derived chondrogenic lineages. This chain is Basic helix-loop-helix transcription factor scleraxis (Scx), found in Mus musculus (Mouse).